The primary structure comprises 194 residues: Peroxynitrite isomerase 1 (194 aa).

The GXWXGXG motif lies at 40–46 (GVWRGEG). The heme b site is built by K157 and H184.

Belongs to the nitrobindin family. As to quaternary structure, homodimer. The cofactor is heme b.

The enzyme catalyses peroxynitrite = nitrate. It participates in nitrogen metabolism. Its function is as follows. Heme-binding protein able to scavenge peroxynitrite and to protect free L-tyrosine against peroxynitrite-mediated nitration, by acting as a peroxynitrite isomerase that converts peroxynitrite to nitrate. Therefore, this protein likely plays a role in peroxynitrite sensing and in the detoxification of reactive nitrogen and oxygen species (RNS and ROS, respectively). Is able to bind nitric oxide (NO) in vitro, but may act as a sensor of peroxynitrite levels in vivo. In Mycobacterium ulcerans (strain Agy99), this protein is Peroxynitrite isomerase 1.